A 151-amino-acid chain; its full sequence is Probable cGMP 3',5'-cyclic phosphodiesterase subunit delta (151 aa).

Belongs to the PDE6D/unc-119 family. In terms of assembly, interacts with Pde6.

Its subcellular location is the nucleus. The protein resides in the cytoplasm. This chain is Probable cGMP 3',5'-cyclic phosphodiesterase subunit delta, found in Anopheles gambiae (African malaria mosquito).